A 288-amino-acid chain; its full sequence is Probable HTH-type transcriptional regulator STM3175 (288 aa).

An HTH araC/xylS-type domain is found at 14-113; it reads RRVCDHIERH…GQSPRRFRQS (100 aa). 2 consecutive DNA-binding regions (H-T-H motif) follow at residues 31–52 and 80–103; these read EALSRMAHSSPFHFHRQFTTWS and VIDIALDAGFQNPESFTRAFKTAF. The tract at residues 111–288 is putative effector binding domain; binds the peptide antibiotic albicidin; the sequence is RQSPDWLAWH…LLTDIYLPLR (178 aa).

Homodimer.

Its function is as follows. Probable transcription factor. The protein is Probable HTH-type transcriptional regulator STM3175 of Salmonella typhimurium (strain LT2 / SGSC1412 / ATCC 700720).